The chain runs to 141 residues: Head virion protein G6P (141 aa).

Transmembrane regions (helical) follow at residues 3-23 (WLSG…DFFA), 33-53 (GLVV…ILLI), and 80-100 (LPGP…LNII).

This sequence belongs to the inovirus G6P protein family. As to quaternary structure, interacts with G3P; this interaction is required for proper integration of G3P and G6P into the virion.

The protein localises to the virion. Its subcellular location is the host membrane. Its function is as follows. Plays essential roles both in the entry of the viral genome into the bacterial host and in budding process. The formation of the G3P-G6P complex termed adsorption complex is essential for correct termination of filamentous phage assembly. The sequence is that of Head virion protein G6P (VI) from Pseudomonas phage Pf1 (Bacteriophage Pf1).